The sequence spans 167 residues: Urease accessory protein UreE (167 aa).

It belongs to the UreE family.

It is found in the cytoplasm. Involved in urease metallocenter assembly. Binds nickel. Probably functions as a nickel donor during metallocenter assembly. The polypeptide is Urease accessory protein UreE (Pseudomonas aeruginosa (strain UCBPP-PA14)).